Consider the following 449-residue polypeptide: MDRVYEIPEEPNVDPVSSLEEDVIRGANPRFTFPFSILFSTFLYCGEAASALYMVRIYRKNSETYWMTYTFSFFMFSSIMVQLTLIFVHRDLAKDKPLSLFMHLILLGPVIRCLEAMIKYLTLWKKEEQEEPYVSLTRKKMLIDGEEVLIEWEVGHSIRTLAMHRNAYKRMSQIQAFLGSVPQLTYQLYVSLISAEVPLGRVVLMVFSLVSVTYGATLCNMLAIQIKYDDYKIRLGPLEVLCITIWRTLEITSRLLILVLFSATLKLKAVPFLVLNFLIILFEPWIKFWRSGAQMPNNIEKNFSRVGTLVVLISVTILYAGINFSCWSALQLRLADRDLVDKGQNWGHMGLHYSVRLVENVIMVLVFKFFGVKVLLNYCHSLIALQLIIAYLISIGFMLLFFQYLHPLRSLFTHNVVDYLHCVCCHQHPRTRVENSEPPFETEARQSVV.

Transmembrane regions (helical) follow at residues 35–55 (FSILFSTFLYCGEAASALYMV), 68–88 (TYTFSFFMFSSIMVQLTLIFV), 98–118 (LSLFMHLILLGPVIRCLEAMI), 174–194 (IQAFLGSVPQLTYQLYVSLIS), 202–222 (VVLMVFSLVSVTYGATLCNML), 241–261 (LCITIWRTLEITSRLLILVLF), 269–289 (AVPFLVLNFLIILFEPWIKFW), 306–326 (VGTLVVLISVTILYAGINFSC), 357–377 (LVENVIMVLVFKFFGVKVLLN), and 382–402 (LIALQLIIAYLISIGFMLLFF).

This sequence belongs to the XK family. As to expression, expressed predominantly in the placenta, in syncytiotrophoblasts. Moderate levels in the adrenal gland, low levels in the trachea and very low levels in the bone marrow.

The protein localises to the cell membrane. The sequence is that of XK-related protein 2 (XKRX) from Homo sapiens (Human).